A 479-amino-acid chain; its full sequence is F-box/LRR-repeat protein 16 (479 aa).

A disordered region spans residues 1 to 92 (MSSPGIDGDP…GPVSGPPVER (92 aa)). The span at 47 to 60 (CQPPPPPTLPPPSL) shows a compositional bias: pro residues. An Omega-N-methylarginine modification is found at R92. The region spanning 94-139 (PLATDEKILNGLFWYFSACEKCILAQVCKAWRRVLYQPKFWAGLTP) is the F-box domain. 6 LRR repeats span residues 321–342 (NLTS…ELVA), 347–369 (KLRS…YVAC), 373–394 (RLEE…SYLS), 398–419 (SLRS…KHLL), 423–444 (NLRL…SGLV), and 446–470 (LQEL…YFSQ).

In terms of assembly, interacts with SKP1 and CUL1.

In terms of biological role, substrate-recognition component of the SCF (SKP1-CUL1-F-box protein)-type E3 ubiquitin ligase complex. This Mus musculus (Mouse) protein is F-box/LRR-repeat protein 16 (Fbxl16).